The following is a 210-amino-acid chain: Large ribosomal subunit protein uL4 (210 aa).

In terms of assembly, part of the 50S ribosomal subunit. In terms of processing, the N-terminus is blocked.

Functionally, one of the primary rRNA binding proteins, this protein initially binds near the 5'-end of the 23S rRNA. It is important during the early stages of 50S assembly. It makes multiple contacts with different domains of the 23S rRNA in the assembled 50S subunit and ribosome. Its function is as follows. Forms part of the polypeptide exit tunnel. In terms of biological role, this protein can be incorporated into E.coli ribosomes in vivo, which resulted in decreased peptidyltransferase (Ptase) activity of the hybrid ribosomes. The hybrid 50S subunits associate less well with 30S subunits to form the ribosome. This is Large ribosomal subunit protein uL4 (rplD) from Thermus thermophilus (strain ATCC 27634 / DSM 579 / HB8).